A 424-amino-acid chain; its full sequence is Probable biofilm formation methyltransferase WspC (424 aa).

The 263-residue stretch at 1–263 folds into the CheR-type methyltransferase domain; sequence MNEQRFFRFL…IAQSFAYVRH (263 aa). S-adenosyl-L-methionine-binding positions include T68, R72, E109, D133, 187 to 188, and 206 to 207; these read NV and RN. The TPR repeat unit spans residues 355–388; the sequence is AQVYYWLGLLSDTEGDAQQALSHYRKALYLEPQH.

As to quaternary structure, monomer. The TPR repeat does not mediate self-association.

Involved in biofilm formation. The polypeptide is Probable biofilm formation methyltransferase WspC (wspC) (Pseudomonas putida (strain ATCC 47054 / DSM 6125 / CFBP 8728 / NCIMB 11950 / KT2440)).